The following is a 105-amino-acid chain: ATP-dependent Clp protease adapter protein ClpS (105 aa).

The protein belongs to the ClpS family. As to quaternary structure, binds to the N-terminal domain of the chaperone ClpA.

Involved in the modulation of the specificity of the ClpAP-mediated ATP-dependent protein degradation. This chain is ATP-dependent Clp protease adapter protein ClpS, found in Streptomyces avermitilis (strain ATCC 31267 / DSM 46492 / JCM 5070 / NBRC 14893 / NCIMB 12804 / NRRL 8165 / MA-4680).